A 416-amino-acid chain; its full sequence is Putative nucleoside permease NupX (416 aa).

Over 1–2 (MD) the chain is Periplasmic. The helical transmembrane segment at 3 to 23 (VMRSVLGMVVLLTIAFLLSVN) threads the bilayer. Over 24–31 (KKKISLRT) the chain is Cytoplasmic. Residues 32–52 (VGAALVLQVVIGGIMLWLPPG) form a helical membrane-spanning segment. The Periplasmic portion of the chain corresponds to 53-95 (RWVAEKVAFGVHKVMAYSDAGSAFIFGSLVGPKMDTLFDGAGF). The helical transmembrane segment at 96–118 (IFGFRVLPAIIFVTALVSILYYI) threads the bilayer. Topologically, residues 119 to 172 (GVMGILIRILGGIFQKALNISKIESFVAVTTIFLGQNEIPAIVKPFIDRLNRNE) are cytoplasmic. The chain crosses the membrane as a helical span at residues 173 to 193 (LFTAICSGMASIAGSTMIGYA). Residues 194–196 (ALG) are Periplasmic-facing. Residues 197–217 (VPVEYLLAASLMAIPGGILFA) traverse the membrane as a helical segment. Over 218–246 (RLLSPATESSQVSFNNLSFTETPPKSIIE) the chain is Cytoplasmic. A helical transmembrane segment spans residues 247–267 (AAATGAMTGLKIAAGVATVVM). Over 268 to 352 (AFVAIIALIN…QTAGTLDAKT (85 aa)) the chain is Periplasmic. Residues 353–373 (VAIISFALCGFANFGSIGVVV) traverse the membrane as a helical segment. Over 374 to 394 (GAFSAVAPHRAPEIAQLGLRA) the chain is Cytoplasmic. Residues 395-415 (LAAATLSNLMSATIAGFFIGL) form a helical membrane-spanning segment. Position 416 (alanine 416) is a topological domain, periplasmic.

It belongs to the concentrative nucleoside transporter (CNT) (TC 2.A.41) family.

It is found in the cell inner membrane. The protein is Putative nucleoside permease NupX (nupX) of Escherichia coli (strain K12).